We begin with the raw amino-acid sequence, 21 residues long: Tricyclic peptide MS-271 (21 aa).

The 3-cysteinyl-aspartic acid (Cys-Asp) cross-link spans 1-9 (CLGVGSCND). Disulfide bonds link Cys1-Cys13 and Cys7-Cys19. Residue Trp21 is modified to D-tryptophan.

Functionally, inhibits chicken myosin light chain kinase with an IC(50) of 8 M. Does not inhibit bovine cAMP-dependent protein kinase or rat protein kinase C. Antibacterial activity against the Gram-positive bacteria B.subtilis, E.faecium and S.aureus. No antibacterial activity against the Gram-negative bacteria E.coli, K.pneumoniae, P.aeruginosa, P.vulgaris, S.sonnei and S.typhosa. No antifungal activity against C.albicans. This chain is Tricyclic peptide MS-271, found in Streptomyces sp.